Here is a 342-residue protein sequence, read N- to C-terminus: MTIALTGGGTGGHLAIVRCLLESAIKKNIECVYIGSQNGQDKAWFENEVRFKEKFFLSSKGVVNQSKFDKISSLLHTLKLSKDCREIFKKYHIQAVFSVGGYSAAPASFAALFSHLPLFIHEQNSKSGSLNMLLKPFATKFFSAFEKEISPYPVADKFFDNARIRKELKNIIFLGGSQGAQFINELALNLAPKLQEQNIKIIHQCGKNDFEKCKKHYQSLNIQADIFDFSLNLEEKMKNADLAISRAGASTLFELCANTLPTIFIPYPYAAKNHQYFNAKFLQDQALCQIFMQNSINLDEFFKSILKLNLENISTRLQNITQKNGADMLIQKALFDNLTFIR.

UDP-N-acetyl-alpha-D-glucosamine-binding positions include 10–12 (TGG), N124, S177, and Q275.

It belongs to the glycosyltransferase 28 family. MurG subfamily.

It localises to the cell inner membrane. The catalysed reaction is di-trans,octa-cis-undecaprenyl diphospho-N-acetyl-alpha-D-muramoyl-L-alanyl-D-glutamyl-meso-2,6-diaminopimeloyl-D-alanyl-D-alanine + UDP-N-acetyl-alpha-D-glucosamine = di-trans,octa-cis-undecaprenyl diphospho-[N-acetyl-alpha-D-glucosaminyl-(1-&gt;4)]-N-acetyl-alpha-D-muramoyl-L-alanyl-D-glutamyl-meso-2,6-diaminopimeloyl-D-alanyl-D-alanine + UDP + H(+). The protein operates within cell wall biogenesis; peptidoglycan biosynthesis. Its function is as follows. Cell wall formation. Catalyzes the transfer of a GlcNAc subunit on undecaprenyl-pyrophosphoryl-MurNAc-pentapeptide (lipid intermediate I) to form undecaprenyl-pyrophosphoryl-MurNAc-(pentapeptide)GlcNAc (lipid intermediate II). The chain is UDP-N-acetylglucosamine--N-acetylmuramyl-(pentapeptide) pyrophosphoryl-undecaprenol N-acetylglucosamine transferase from Campylobacter jejuni subsp. jejuni serotype O:2 (strain ATCC 700819 / NCTC 11168).